Here is a 137-residue protein sequence, read N- to C-terminus: Small ribosomal subunit protein uS12 (137 aa).

The residue at position 89 (D89) is a 3-methylthioaspartic acid. Residues 105 to 137 (AGVAGRTQRRSKYGAKRPKAGQAAAPAKGKGKK) are disordered. Residues 111–123 (TQRRSKYGAKRPK) show a composition bias toward basic residues. Over residues 124-137 (AGQAAAPAKGKGKK) the composition is skewed to low complexity.

The protein belongs to the universal ribosomal protein uS12 family. Part of the 30S ribosomal subunit. Contacts proteins S8 and S17. May interact with IF1 in the 30S initiation complex.

In terms of biological role, with S4 and S5 plays an important role in translational accuracy. Functionally, interacts with and stabilizes bases of the 16S rRNA that are involved in tRNA selection in the A site and with the mRNA backbone. Located at the interface of the 30S and 50S subunits, it traverses the body of the 30S subunit contacting proteins on the other side and probably holding the rRNA structure together. The combined cluster of proteins S8, S12 and S17 appears to hold together the shoulder and platform of the 30S subunit. The chain is Small ribosomal subunit protein uS12 from Phocaeicola vulgatus (strain ATCC 8482 / DSM 1447 / JCM 5826 / CCUG 4940 / NBRC 14291 / NCTC 11154) (Bacteroides vulgatus).